Consider the following 274-residue polypeptide: NADPH-dependent 7-cyano-7-deazaguanine reductase (274 aa).

80 to 82 (VES) is a binding site for substrate. Residue 82–83 (SK) participates in NADPH binding. The active-site Thioimide intermediate is the Cys-181. The active-site Proton donor is Asp-188. 220-221 (HE) is a binding site for substrate. NADPH is bound at residue 249–250 (RG).

This sequence belongs to the GTP cyclohydrolase I family. QueF type 2 subfamily. As to quaternary structure, homodimer.

It localises to the cytoplasm. The catalysed reaction is 7-aminomethyl-7-carbaguanine + 2 NADP(+) = 7-cyano-7-deazaguanine + 2 NADPH + 3 H(+). The protein operates within tRNA modification; tRNA-queuosine biosynthesis. Functionally, catalyzes the NADPH-dependent reduction of 7-cyano-7-deazaguanine (preQ0) to 7-aminomethyl-7-deazaguanine (preQ1). This Burkholderia vietnamiensis (strain G4 / LMG 22486) (Burkholderia cepacia (strain R1808)) protein is NADPH-dependent 7-cyano-7-deazaguanine reductase.